A 97-amino-acid polypeptide reads, in one-letter code: Aspartyl/glutamyl-tRNA(Asn/Gln) amidotransferase subunit C (97 aa).

This sequence belongs to the GatC family. As to quaternary structure, heterotrimer of A, B and C subunits.

It catalyses the reaction L-glutamyl-tRNA(Gln) + L-glutamine + ATP + H2O = L-glutaminyl-tRNA(Gln) + L-glutamate + ADP + phosphate + H(+). It carries out the reaction L-aspartyl-tRNA(Asn) + L-glutamine + ATP + H2O = L-asparaginyl-tRNA(Asn) + L-glutamate + ADP + phosphate + 2 H(+). Its function is as follows. Allows the formation of correctly charged Asn-tRNA(Asn) or Gln-tRNA(Gln) through the transamidation of misacylated Asp-tRNA(Asn) or Glu-tRNA(Gln) in organisms which lack either or both of asparaginyl-tRNA or glutaminyl-tRNA synthetases. The reaction takes place in the presence of glutamine and ATP through an activated phospho-Asp-tRNA(Asn) or phospho-Glu-tRNA(Gln). This is Aspartyl/glutamyl-tRNA(Asn/Gln) amidotransferase subunit C from Prochlorococcus marinus (strain SARG / CCMP1375 / SS120).